The chain runs to 343 residues: ATP phosphoribosyltransferase regulatory subunit (343 aa).

Residues 324–343 are disordered; the sequence is RANGRAKRPARPRRSPPRPR. Residues 327–343 are compositionally biased toward basic residues; it reads GRAKRPARPRRSPPRPR.

It belongs to the class-II aminoacyl-tRNA synthetase family. HisZ subfamily. As to quaternary structure, heteromultimer composed of HisG and HisZ subunits.

Its subcellular location is the cytoplasm. It functions in the pathway amino-acid biosynthesis; L-histidine biosynthesis; L-histidine from 5-phospho-alpha-D-ribose 1-diphosphate: step 1/9. Its function is as follows. Required for the first step of histidine biosynthesis. May allow the feedback regulation of ATP phosphoribosyltransferase activity by histidine. The chain is ATP phosphoribosyltransferase regulatory subunit from Anaeromyxobacter sp. (strain Fw109-5).